Reading from the N-terminus, the 259-residue chain is (3R)-3-hydroxyacyl-CoA dehydrogenase (259 aa).

NAD(+) is bound by residues Leu13–Ile21 and Asp40–Leu41. Ser58 carries the phosphoserine modification. Ala72–Val74 lines the NAD(+) pocket. Residue Ser154 participates in substrate binding. The residue at position 158 (Lys158) is an N6-succinyllysine. The Proton acceptor role is filled by Tyr167. Residues Tyr167–Lys171 and Ile200–Thr202 contribute to the NAD(+) site. Lys171 is subject to N6-succinyllysine.

This sequence belongs to the short-chain dehydrogenases/reductases (SDR) family. As to quaternary structure, heterotetramer with CBR4; contains two molecules of HSD17B8 and CBR4.

It is found in the mitochondrion matrix. It catalyses the reaction a (3R)-3-hydroxyacyl-CoA + NAD(+) = a 3-oxoacyl-CoA + NADH + H(+). The enzyme catalyses 17beta-estradiol + NAD(+) = estrone + NADH + H(+). It carries out the reaction testosterone + NAD(+) = androst-4-ene-3,17-dione + NADH + H(+). The catalysed reaction is 17beta-hydroxy-5alpha-androstan-3-one + NAD(+) = 5alpha-androstan-3,17-dione + NADH + H(+). The protein operates within steroid biosynthesis; estrogen biosynthesis. Its pathway is lipid metabolism; fatty acid biosynthesis. It functions in the pathway lipid metabolism; mitochondrial fatty acid beta-oxidation. Functionally, required for the solubility and assembly of the heterotetramer 3-ketoacyl-[acyl carrier protein] (ACP) reductase functional complex (KAR or KAR1) that forms part of the mitochondrial fatty acid synthase (mtFAS). Alpha-subunit of the KAR complex that acts as scaffold protein required for the stability of carbonyl reductase type-4 (CBR4, beta-subunit of the KAR complex) and for its 3-ketoacyl-ACP reductase activity, thereby participating in mitochondrial fatty acid biosynthesis. Catalyzes the NAD-dependent conversion of (3R)-3-hydroxyacyl-CoA into 3-ketoacyl-CoA (3-oxoacyl-CoA) with no chain length preference; this enzymatic activity is not needed for the KAR function. Prefers (3R)-3-hydroxyacyl-CoA over (3S)-3-hydroxyacyl-CoA and displays enzymatic activity only in the presence of NAD(+). Cooperates with enoyl-CoA hydratase 1 in mitochondria, together they constitute an alternative route to the auxiliary enzyme pathways for the breakdown of Z-PUFA (cis polyunsaturated fatty acid) enoyl-esters. NAD-dependent 17-beta-hydroxysteroid dehydrogenase with highest activity towards estradiol (17beta-estradiol or E2). Has very low activity towards testosterone and dihydrotestosterone (17beta-hydroxy-5alpha-androstan-3-one). Primarily an oxidative enzyme, it can switch to a reductive mode determined in the appropriate physiologic milieu and catalyze the reduction of estrone (E1) to form biologically active 17beta-estradiol. The chain is (3R)-3-hydroxyacyl-CoA dehydrogenase (HSD17B8) from Canis lupus familiaris (Dog).